The chain runs to 168 residues: Disulfide bond formation protein B (168 aa).

Residues 1 to 13 (MFLTYFDAMPRRV) lie on the Cytoplasmic side of the membrane. The helical transmembrane segment at 14–30 (LALVSLACVALLAFGLY) threads the bilayer. Residues 31–48 (LQHVVGLEPCPMCIVQRY) lie on the Periplasmic side of the membrane. Cys40 and Cys43 form a disulfide bridge. The helical transmembrane segment at 49 to 64 (ALVLVAVVAGITAVAK) threads the bilayer. Residues 65 to 70 (SRGLLI) lie on the Cytoplasmic side of the membrane. The chain crosses the membrane as a helical span at residues 71 to 88 (TGSGLLVLLSGFGAFVAA). Over 89 to 144 (RQSFLQWYPPEVASCGRDFYGMIETFPLKRAIPMIFKGSGDCTKIDWTFLGLSIAN) the chain is Periplasmic. Cys103 and Cys130 are joined by a disulfide. Residues 145 to 163 (WSFLCFVAIALVGLVLITR) form a helical membrane-spanning segment. Residues 164-168 (LARQR) lie on the Cytoplasmic side of the membrane.

This sequence belongs to the DsbB family.

It is found in the cell inner membrane. Functionally, required for disulfide bond formation in some periplasmic proteins. Acts by oxidizing the DsbA protein. The chain is Disulfide bond formation protein B from Polaromonas sp. (strain JS666 / ATCC BAA-500).